A 329-amino-acid chain; its full sequence is MAKSVSISYLALEQIFNDTIGAGEIKVAGLLVGHPVNGGVHIARTIPTSRGTVTYVRISAEEISRAVEELNPGEKIVGWYHSRPGQGVFFSQDDIETHEKCLDFNPYFQALVIDPHQAKYGTPMADCVRFYTVRNHKEVPIHGYKLTGSSMQSYYDPKEFVFDKYGFPHHYTLTHAGKTKISHRKSNMDASFEYDVFICHAHEDKEFFVRELAEKLHSKGLRVWYDEFTLSLGDNLRRSIENGLAKSRYGIVVLSKRFFEKEWPQKELDGLVAKEVEGKKVILPVWHGITREEVQSFSSILANRLAASSEKGIDYVVNEILRVLRKKSV.

Residues Val5–Arg134 enclose the MPN domain. A TIR domain is found at Phe192 to Leu324. NAD(+)-binding positions include Ala201 to His202 and Ser231. Glu267 is a catalytic residue.

It carries out the reaction NAD(+) + H2O = ADP-D-ribose + nicotinamide + H(+). Functionally, NAD(+) hydrolase (NADase) that catalyzes cleavage of NAD(+) into ADP-D-ribose (ADPR) and nicotinamide. This chain is NAD(+) hydrolase TcpA, found in Theionarchaea archaeon (strain DG-70-1).